Reading from the N-terminus, the 3567-residue chain is Erythronolide synthase EryA2 (3567 aa).

The 426-residue stretch at 30 to 455 (SDPIAIVSMA…GTNAHVIVEE (426 aa)) folds into the Ketosynthase family 3 (KS3) 1 domain. 2 module regions span residues 33–1467 (IAIV…QHLR) and 1491–3485 (IAIV…EHLR). The active-site Acyl-thioester intermediate; for beta-ketoacyl synthase 1 activity is C202. Residues H337 and H377 each act as for beta-ketoacyl synthase 1 activity in the active site. Residues 560–880 (VFLFPGQGSQ…MATAHVSGVD (321 aa)) form an acyltransferase 1 region. Catalysis depends on S651, which acts as the Acyl-ester intermediate; for acyltransferase 1 activity. The interval 1132-1297 (GTVLVTGAAS…CTSVAWTPWA (166 aa)) is C2-type beta-ketoacyl reductase 1. The active-site For C2-type beta-ketoacyl reductase 1 and probable racemase activity is the Y1267. The tract at residues 1364-1385 (GRGGQAEAEPDSGPTGEPAQRL) is disordered. The region spanning 1395 to 1470 (ENLLELVANA…ALAQHLRARL (76 aa)) is the Carrier 1 domain. S1430 bears the O-(pantetheine 4'-phosphoryl)serine mark. The 425-residue stretch at 1488–1912 (SEPIAIVGIG…GTNAHVIVEE (425 aa)) folds into the Ketosynthase family 3 (KS3) 2 domain. The active-site Acyl-thioester intermediate; for beta-ketoacyl synthase 2 activity is the C1661. Catalysis depends on for beta-ketoacyl synthase 2 activity residues H1796 and H1834. The acyltransferase 2 stretch occupies residues 2015 to 2331 (LVFPGQGAQW…NLLRAHVHGV (317 aa)). The Acyl-ester intermediate; for acyltransferase 2 activity role is filled by S2105. Residues 2377-2502 (HPLLLAAVDV…GTLAQGVAAG (126 aa)) are N-terminal hotdog fold. The dehydratase stretch occupies residues 2377-2645 (HPLLLAAVDV…SLVVRSTGEK (269 aa)). The region spanning 2377-2648 (HPLLLAAVDV…VRSTGEKWEQ (272 aa)) is the PKS/mFAS DH domain. Catalysis depends on H2409, which acts as the Proton acceptor; for dehydratase activity. Residues 2514-2648 (AVRIPLDDHY…VRSTGEKWEQ (135 aa)) form a C-terminal hotdog fold region. The Proton donor; for dehydratase activity role is filled by D2571. The enoyl reductase stretch occupies residues 2831–3131 (GAIDSVAFEP…RGRHVGKLVL (301 aa)). The active-site For enoyl reductase activity is Y2874. Residues 2964 to 2973 (HAAAGGVGMA), 3149 to 3152 (TGTL), 3173 to 3176 (SRRG), 3202 to 3203 (DT), K3250, and 3272 to 3273 (FS) contribute to the NADP(+) site. Residues 3141 to 3317 (GTVLITGGTG…AKALGWGLWA (177 aa)) form a beta-ketoacyl reductase 2 region. Y3287 (for beta-ketoacyl reductase 2 activity) is an active-site residue. A Carrier 2 domain is found at 3413–3488 (AGLAELVRSH…AVAEHLRDRL (76 aa)). S3448 bears the O-(pantetheine 4'-phosphoryl)serine mark.

In terms of assembly, homodimer. Erythronolide synthase is composed of EryAI, EryAII and EryAIII multimodular (2 modules) polypeptides each coding for a functional synthase subunit which participates in 2 of the six FAS-like elongation steps required for formation of the polyketide. Module 1, 2, 3, 4, 5, and 6 participating in biosynthesis steps 1, 2, 3, 4, 5, and 6, respectively. It depends on pantetheine 4'-phosphate as a cofactor.

It catalyses the reaction 6 (S)-methylmalonyl-CoA + propanoyl-CoA + 6 NADPH + 12 H(+) = 6-deoxyerythronolide B + 6 CO2 + 6 NADP(+) + 7 CoA + H2O. It participates in antibiotic biosynthesis; erythromycin biosynthesis. Involved in the biosynthesis of antibiotic erythromycin via the biosynthesis of its aglycone precursor, 6-deoxyerythronolide B (6-dEB). The polypeptide is Erythronolide synthase EryA2 (Saccharopolyspora erythraea (Streptomyces erythraeus)).